The chain runs to 102 residues: MAFQLRIVQHLLHITFLRLPLAYPSQIHQRENERMFLLRIHRQDVQHLSHRRLRQLNEHRSLLPKGFPFKLLRPLPQLQRLLSQVCRGSVRIDACCCIPSCH.

Residues 1–22 (MAFQLRIVQHLLHITFLRLPLA) form the signal peptide. A RxLR-dEER motif is present at residues 51–60 (RRLRQLNEHR).

The protein belongs to the RxLR effector family.

The protein localises to the secreted. It is found in the host chloroplast envelope. The protein resides in the host cytoplasm. Its subcellular location is the host nucleus. Effector that partially suppresses the tobacco programmed cell death induced by cell death-inducing proteins. The sequence is that of Secreted RxLR effector protein 61 from Plasmopara viticola (Downy mildew of grapevine).